The chain runs to 94 residues: Evasin P1172 (94 aa).

Disulfide bonds link C35-C54, C39-C56, and C50-C67. N-linked (GlcNAc...) asparagine glycosylation is found at N38, N44, N53, and N80.

The protein resides in the secreted. Salivary chemokine-binding protein which binds to host chemokines CXCL1, CXCL2, CXCL5 and CXCL8. This is Evasin P1172 from Ixodes ricinus (Common tick).